Here is a 390-residue protein sequence, read N- to C-terminus: Neuromedin-B receptor (390 aa).

A compositionally biased stretch (polar residues) spans 1–19 (MPSKSLSNLSVTTGANESG). A disordered region spans residues 1–22 (MPSKSLSNLSVTTGANESGSVP). At 1–41 (MPSKSLSNLSVTTGANESGSVPEGWERDFLPASDGTTTELV) the chain is on the extracellular side. N-linked (GlcNAc...) asparagine glycosylation is found at Asn-8 and Asn-16. Residues 42-65 (IRCVIPSLYLLIITVGLLGNIMLV) form a helical membrane-spanning segment. Residues 66–79 (KIFITNSAMRSVPN) lie on the Cytoplasmic side of the membrane. The chain crosses the membrane as a helical span at residues 80 to 99 (IFISNLAAGDLLLLLTCVPV). Residues 100 to 117 (DASRYFFDEWMFGKVGCK) lie on the Extracellular side of the membrane. Residues Cys-116 and Cys-198 are joined by a disulfide bond. A helical transmembrane segment spans residues 118–139 (LIPVIQLTSVGVSVFTLTALSA). Over 140–156 (DRYRAIVNPMDMQTSGA) the chain is Cytoplasmic. Residues 157–177 (LLRTCVKAMGIWVVSVLLAVP) form a helical membrane-spanning segment. Residues 178–211 (EAVFSEVARISSLDNSSFTACIPYPQTDELHPKI) lie on the Extracellular side of the membrane. An N-linked (GlcNAc...) asparagine glycan is attached at Asn-192. Residues 212 to 235 (HSVLIFLVYFLIPLAIISIYYYHI) traverse the membrane as a helical segment. Residues 236–266 (AKTLIKSAHNLPGEYNEHTKKQMETRKRLAK) are Cytoplasmic-facing. The helical transmembrane segment at 267-287 (IVLVFVGCFIFCWFPNHILYM) threads the bilayer. Over 288–299 (YRSFNYNEIDPS) the chain is Extracellular. The chain crosses the membrane as a helical span at residues 300 to 327 (LGHMIVTLVARVLSFGNSCVNPFALYLL). The Cytoplasmic portion of the chain corresponds to 328 to 390 (SESFRRHFNS…GHSMKQEMAL (63 aa)). Residue Cys-341 is the site of S-palmitoyl cysteine attachment. Ser-352 bears the Phosphoserine mark.

Belongs to the G-protein coupled receptor 1 family. As to expression, expressed in epididymis (at protein level).

It is found in the cell membrane. Functionally, receptor for neuromedin-B. Contributes to the maintenance of basal sigh rate through signaling in the pre-Botzinger complex, a cluster of several thousand neurons in the ventrolateral medulla responsible for inspiration during respiratory activity. Contributes to the induction of sneezing following exposure to chemical irritants or allergens which causes release of NMB by nasal sensory neurons and activation of NMBR-expressing neurons in the sneeze-evoking region of the brainstem. These in turn activate neurons of the caudal ventral respiratory group, giving rise to the sneezing response. Contributes to induction of acute itch, possibly through its activation on dorsal root ganglion neurons by the NMB peptide. Plays a role in the innate immune response to influenza A virus infection by enhancing interferon alpha expression and reducing expression of IL6. Plays a role in CSF1-induced proliferation of osteoclast precursors by contributing to the positive regulation of the expression of the CSF1 receptor CSF1R. The polypeptide is Neuromedin-B receptor (NMBR) (Homo sapiens (Human)).